We begin with the raw amino-acid sequence, 318 residues long: tRNA(Ile)-lysidine synthase (318 aa).

An ATP-binding site is contributed by 26–31 (SGGADS).

It belongs to the tRNA(Ile)-lysidine synthase family.

The protein localises to the cytoplasm. The enzyme catalyses cytidine(34) in tRNA(Ile2) + L-lysine + ATP = lysidine(34) in tRNA(Ile2) + AMP + diphosphate + H(+). Its function is as follows. Ligates lysine onto the cytidine present at position 34 of the AUA codon-specific tRNA(Ile) that contains the anticodon CAU, in an ATP-dependent manner. Cytidine is converted to lysidine, thus changing the amino acid specificity of the tRNA from methionine to isoleucine. This Nocardia farcinica (strain IFM 10152) protein is tRNA(Ile)-lysidine synthase.